We begin with the raw amino-acid sequence, 128 residues long: Fluoride-specific ion channel FluC (128 aa).

4 helical membrane-spanning segments follow: residues 4–24 (LLLALIVGLGGFLGASLRYLI), 39–59 (GTLIANILGALLIGFIMEFSM), 71–91 (FLTTGIMGGLTTFSTFSYETI), and 99–119 (ITLGIENIILNLGCSLLFVVI). Na(+)-binding residues include Gly78 and Thr81.

It belongs to the fluoride channel Fluc/FEX (TC 1.A.43) family.

It is found in the cell membrane. It carries out the reaction fluoride(in) = fluoride(out). Its activity is regulated as follows. Na(+) is not transported, but it plays an essential structural role and its presence is essential for fluoride channel function. Fluoride-specific ion channel. Important for reducing fluoride concentration in the cell, thus reducing its toxicity. The protein is Fluoride-specific ion channel FluC of Clostridium perfringens (strain ATCC 13124 / DSM 756 / JCM 1290 / NCIMB 6125 / NCTC 8237 / Type A).